The chain runs to 246 residues: Polyhedrin (246 aa).

Belongs to the polyhedrin family.

In terms of biological role, major component of the virus occlusion bodies, which are large proteinaceous structures (polyhedra), that protect the virus from the outside environment for extended periods until they are ingested by insect larvae. This Mamestra brassicae nuclear polyhedrosis virus (MbNPV) protein is Polyhedrin (PH).